The primary structure comprises 49 residues: Small, acid-soluble spore protein O (49 aa).

The disordered stretch occupies residues 1–49 (MGKRKANHTISGMNAASAQGQGTGYNEEFANEPLTPAERQNNKKRKKNQ). Residues 8 to 20 (HTISGMNAASAQG) show a composition bias toward polar residues.

Belongs to the SspO family.

Its subcellular location is the spore core. The sequence is that of Small, acid-soluble spore protein O from Bacillus cereus (strain B4264).